A 73-amino-acid polypeptide reads, in one-letter code: U3-agatoxin-Ao1j (73 aa).

The signal sequence occupies residues 1 to 20; it reads MRTIISLLLLSAMVFAVIEA. A propeptide spanning residues 21–34 is cleaved from the precursor; the sequence is ISLEEGLQLFEGER. Disulfide bonds link Cys-36–Cys-52, Cys-43–Cys-57, Cys-51–Cys-67, and Cys-59–Cys-65. At Ser-71 the chain carries Serine amide.

It belongs to the neurotoxin 07 (Beta/delta-agtx) family. 03 (aga-4) subfamily. Aga sub-subfamily. As to expression, expressed by the venom gland.

It is found in the secreted. In terms of biological role, insecticidal neurotoxin that induces an irreversible spastic paralysis when injected into insects. Modifies presynaptic voltage-gated sodium channels (Nav), causing them to open at the normal resting potential of the nerve. This leads to spontaneous release of neurotransmitter and repetitive action potentials in motor neurons. This Agelena orientalis (Funnel-web spider) protein is U3-agatoxin-Ao1j.